A 734-amino-acid chain; its full sequence is Regulator of G-protein signaling rgs-6 (734 aa).

Positions 1-24 (MSTPCSGNEPATPTNTSPNNETSN) are disordered. Over residues 8–24 (NEPATPTNTSPNNETSN) the composition is skewed to low complexity. One can recognise an RGS domain in the interval 46 to 157 (IFKKVIRDPV…YDCWPRFLRS (112 aa)). Disordered regions lie at residues 162-236 (QPSF…SPTH), 489-515 (HAVS…YSPA), and 538-734 (VNAG…AAYV). Acidic residues predominate over residues 166–176 (TDEELAADDED). The segment covering 180 to 191 (HSQPTSLNNTNE) has biased composition (polar residues). Residues 194 to 208 (AAAQQSQPAPNAPAA) show a composition bias toward low complexity. Composition is skewed to polar residues over residues 494–506 (SDPN…SQDR) and 538–557 (VNAG…SKNR). Composition is skewed to basic and acidic residues over residues 563–585 (SKTE…RSDD) and 606–619 (TTEE…KSGD). A compositionally biased stretch (low complexity) spans 642–694 (AAAAAAGASPSTSAPSTSTSVQTKTTTSPTKSPTSTTITTSGTTTSATSSVAT). Composition is skewed to polar residues over residues 705-715 (SASTPATSSQL) and 724-734 (RESSWQTAAYV).

The protein is Regulator of G-protein signaling rgs-6 of Caenorhabditis elegans.